The chain runs to 1398 residues: Pyrolysin (1398 aa).

Residues 1–26 (MNKKGLTVLFIAIMLLSVVPVHFVSA) form the signal peptide. Positions 27–149 (GTPPVSSENS…KTKEPSLEPK (123 aa)) are excised as a propeptide. Residue N152 is glycosylated (N-linked (GlcNAc...) asparagine). Residues 154-656 (TWVINALQFI…HGLVNVTKSW (503 aa)) form the Peptidase S8 domain. Catalysis depends on D179, which acts as the Charge relay system. N-linked (GlcNAc...) asparagine glycosylation is found at N222, N228, N240, N257, N262, N298, and N327. H365 serves as the catalytic Charge relay system. N-linked (GlcNAc...) asparagine glycosylation is present at N406. S590 acts as the Charge relay system in catalysis. Residues N651, N663, N739, N792, N893, N908, N917, N929, N1048, N1056, N1084, N1117, N1133, N1140, N1148, N1208, N1233, N1237, and N1332 are each glycosylated (N-linked (GlcNAc...) asparagine).

This sequence belongs to the peptidase S8 family. Post-translationally, LWM pyrolysin seems to be produced by autoproteolytic activation of HMW pyrolysin. Glycosylated.

Its subcellular location is the cell envelope. Its function is as follows. Has endopeptidase activity toward caseins, casein fragments including alpha-S1-casein and synthetic peptides. The sequence is that of Pyrolysin (pls) from Pyrococcus furiosus (strain ATCC 43587 / DSM 3638 / JCM 8422 / Vc1).